We begin with the raw amino-acid sequence, 1027 residues long: D-2-hydroxyglutarate dehydrogenase (1027 aa).

One can recognise an FAD-binding PCMH-type domain in the interval 48–284; sequence YQQLPQAILF…CEAKLNLLLI (237 aa). Positions 405 and 503 each coordinate (R)-2-hydroxyglutarate. Residues 665–696 form the 4Fe-4S ferredoxin-type domain; the sequence is HEVKAAMDTCLACKACASQCPIKIDVPSFRAK. [4Fe-4S] cluster contacts are provided by Cys674, Cys677, Cys680, and Cys684.

In the N-terminal section; belongs to the FAD-binding oxidoreductase/transferase type 4 family. Homotetramer. Requires [4Fe-4S] cluster as cofactor. FAD is required as a cofactor.

The catalysed reaction is (R)-2-hydroxyglutarate + A = 2-oxoglutarate + AH2. Its function is as follows. Catalyzes the oxidation of D-2-hydroxyglutarate (D-2-HGA) to 2-oxoglutarate. Provides the way to recycle D-2-HGA produced during L-serine synthesis by SerA, by converting it back to 2-oxoglutarate. The physiological molecule that functions as the primary electron acceptor during D-2-HGA oxidation is unknown. This chain is D-2-hydroxyglutarate dehydrogenase, found in Haemophilus influenzae (strain ATCC 51907 / DSM 11121 / KW20 / Rd).